The primary structure comprises 91 residues: Elongation factor 1-beta (91 aa).

Belongs to the EF-1-beta/EF-1-delta family.

In terms of biological role, promotes the exchange of GDP for GTP in EF-1-alpha/GDP, thus allowing the regeneration of EF-1-alpha/GTP that could then be used to form the ternary complex EF-1-alpha/GTP/AAtRNA. This chain is Elongation factor 1-beta, found in Caldivirga maquilingensis (strain ATCC 700844 / DSM 13496 / JCM 10307 / IC-167).